The following is a 565-amino-acid chain: UV-stimulated scaffold protein A homolog (565 aa).

Residues 11-156 (RKNLNRILQE…VTLRKTKFVD (146 aa)) are VHS-like. A coiled-coil region spans residues 155–215 (VDYENGEKKI…ELETTMEMLV (61 aa)). The UVSSA-type zinc finger occupies 441–468 (DRECLAKLPSGALCKRKDMFKCPLHGPL). 4 residues coordinate Zn(2+): Cys444, Cys454, Cys462, and His465. Positions 480 to 510 (DEDRLKEIDRKERKRLKEAEEFSRKIVKEYE) form a coiled coil. 2 disordered regions span residues 510–530 (ESKT…SRLQ) and 542–565 (VSAD…FSHL).

It belongs to the UVSSA family.

The protein resides in the chromosome. Its function is as follows. Factor involved in transcription-coupled nucleotide excision repair (TC-NER) in response to UV damage. TC-NER allows RNA polymerase II-blocking lesions to be rapidly removed from the transcribed strand of active genes. The chain is UV-stimulated scaffold protein A homolog from Caenorhabditis briggsae.